Consider the following 185-residue polypeptide: Elongation factor P (185 aa).

It belongs to the elongation factor P family.

It localises to the cytoplasm. It participates in protein biosynthesis; polypeptide chain elongation. Functionally, involved in peptide bond synthesis. Stimulates efficient translation and peptide-bond synthesis on native or reconstituted 70S ribosomes in vitro. Probably functions indirectly by altering the affinity of the ribosome for aminoacyl-tRNA, thus increasing their reactivity as acceptors for peptidyl transferase. The protein is Elongation factor P of Lysinibacillus sphaericus (strain C3-41).